Consider the following 369-residue polypeptide: Protein FAM187B (369 aa).

The N-terminal stretch at methionine 1–glycine 17 is a signal peptide. The Extracellular portion of the chain corresponds to phenylalanine 18 to glycine 333. Residues asparagine 45, asparagine 68, and asparagine 130 are each glycosylated (N-linked (GlcNAc...) asparagine). The helical transmembrane segment at leucine 334–isoleucine 354 threads the bilayer. The Cytoplasmic segment spans residues arginine 355 to lysine 369.

The protein belongs to the FAM187 family.

The protein localises to the membrane. This Macaca fascicularis (Crab-eating macaque) protein is Protein FAM187B (FAM187B).